We begin with the raw amino-acid sequence, 109 residues long: ATP-dependent Clp protease adapter protein ClpS (109 aa).

Residues 1–23 (MTERKHDDTGVEEGTGLATKTRP) are disordered.

Belongs to the ClpS family. Binds to the N-terminal domain of the chaperone ClpA.

Its function is as follows. Involved in the modulation of the specificity of the ClpAP-mediated ATP-dependent protein degradation. This chain is ATP-dependent Clp protease adapter protein ClpS, found in Maricaulis maris (strain MCS10) (Caulobacter maris).